The primary structure comprises 228 residues: 2,3-bisphosphoglycerate-dependent phosphoglycerate mutase (228 aa).

Substrate is bound by residues 8–15, 21–22, Arg60, 87–90, Lys98, 114–115, and 183–184; these read RHGQSVWN, TG, ERHY, RR, and GN. His9 acts as the Tele-phosphohistidine intermediate in catalysis. Glu87 functions as the Proton donor/acceptor in the catalytic mechanism.

Belongs to the phosphoglycerate mutase family. BPG-dependent PGAM subfamily. Homodimer.

The enzyme catalyses (2R)-2-phosphoglycerate = (2R)-3-phosphoglycerate. The protein operates within carbohydrate degradation; glycolysis; pyruvate from D-glyceraldehyde 3-phosphate: step 3/5. Functionally, catalyzes the interconversion of 2-phosphoglycerate and 3-phosphoglycerate. The sequence is that of 2,3-bisphosphoglycerate-dependent phosphoglycerate mutase from Rhodospirillum centenum (strain ATCC 51521 / SW).